The following is a 1072-amino-acid chain: Zn(2)-C6 fungal-type transcription factor FTF1a (1072 aa).

Residues 178-205 (CMACRRKKIRCSGEKPACKHCLRSRILC) constitute a DNA-binding region (zn(2)-C6 fungal-type).

It localises to the nucleus. In terms of biological role, zn(2)-C6 fungal-type transcription factor that has a role in the establishment of the fungus within the plant and/or the progress of the disease. Regulates the expression of virulence factors such as SIX1 and SIX6. The sequence is that of Zn(2)-C6 fungal-type transcription factor FTF1a from Fusarium oxysporum f. sp. lycopersici (strain 4287 / CBS 123668 / FGSC 9935 / NRRL 34936) (Fusarium vascular wilt of tomato).